The following is a 479-amino-acid chain: Poly(A) polymerase catalytic subunit (479 aa).

Catalysis depends on residues aspartate 202 and aspartate 204. Positions 202, 204, and 253 each coordinate Ca(2+).

The protein belongs to the poxviridae poly(A) polymerase catalytic subunit family. As to quaternary structure, heterodimer of a large (catalytic) subunit and a small (regulatory) subunit.

The enzyme catalyses RNA(n) + ATP = RNA(n)-3'-adenine ribonucleotide + diphosphate. Functionally, polymerase that creates the 3'-poly(A) tail of mRNA's. This chain is Poly(A) polymerase catalytic subunit (OPG063), found in Mus musculus (Mouse).